Here is a 392-residue protein sequence, read N- to C-terminus: MEDVTLHIVERPYSGYPDASSEGPEPTPGEARATEEPSGTGSDELIKSDQVNGVLVLSLLDKIIGAVDQIQLTQAQLEERQAEMEGAVQSIQGELSKLGKAHATTSNTVSKLLEKVRKVSVNVKTVRGSLERQAGQIKKLEVNEAELLRRRNFKVMIYQDEVKLPAKLSVSKSLKESEALPEKEGDELGEGERPEEDAAAIELSSDEAVEVEEVIEESRAERIKRSGLRRVDDFKKAFSKEKMEKTKVRTRENLEKTRLKTKENLEKTRHTLEKRMNKLGTRLVPVERREKLKTSRDKLRKSFTPDHVVYARSKTAVYKVPPFTFHVKKIREGEVEVLKATEMVEVGPDDDEVGAERGAETDLLRGSSPDVHTLLEITEESDAVLVDKSDSD.

N-acetylmethionine is present on methionine 1. Basic and acidic residues predominate over residues 1-10 (MEDVTLHIVE). Positions 1-45 (MEDVTLHIVERPYSGYPDASSEGPEPTPGEARATEEPSGTGSDEL) are disordered. The required for homotrimerization and for interaction with CAVIN2 and CAVIN3 stretch occupies residues 1–100 (MEDVTLHIVE…IQGELSKLGK (100 aa)). Serine 21 and serine 38 each carry phosphoserine. Position 40 is a phosphothreonine (threonine 40). Phosphoserine is present on residues serine 42 and serine 48. The segment at 54–64 (VLVLSLLDKII) is nuclear export signal. The leucine-zipper 1 stretch occupies residues 55–77 (LVLSLLDKIIGAVDQIQLTQAQL). Lysine 118 participates in a covalent cross-link: Glycyl lysine isopeptide (Lys-Gly) (interchain with G-Cter in SUMO2). Serine 120 is subject to Phosphoserine. Residue lysine 124 forms a Glycyl lysine isopeptide (Lys-Gly) (interchain with G-Cter in SUMO2) linkage. The interval 138 to 154 (KKLEVNEAELLRRRNFK) is nuclear localization signal. Tyrosine 158 is modified (phosphotyrosine). Lysine 163 is covalently cross-linked (Glycyl lysine isopeptide (Lys-Gly) (interchain with G-Cter in SUMO1); alternate). Residue lysine 163 forms a Glycyl lysine isopeptide (Lys-Gly) (interchain with G-Cter in SUMO2); alternate linkage. Lysine 167 is covalently cross-linked (Glycyl lysine isopeptide (Lys-Gly) (interchain with G-Cter in SUMO2)). Residues 168-188 (LSVSKSLKESEALPEKEGDEL) form a leucine-zipper 2 region. 2 positions are modified to phosphoserine: serine 169 and serine 171. Residue lysine 172 forms a Glycyl lysine isopeptide (Lys-Gly) (interchain with G-Cter in SUMO2) linkage. A phosphoserine mark is found at serine 173 and serine 177. A compositionally biased stretch (basic and acidic residues) spans 173–183 (SLKESEALPEK). Residues 173-198 (SLKESEALPEKEGDELGEGERPEEDA) are disordered. The segment covering 184-198 (EGDELGEGERPEEDA) has biased composition (acidic residues). A coiled-coil region spans residues 201–284 (IELSSDEAVE…RMNKLGTRLV (84 aa)). Phosphoserine is present on residues serine 204 and serine 205. The nuclear localization signal stretch occupies residues 235 to 251 (KKAFSKEKMEKTKVRTR). Positions 259 to 299 (LKTKENLEKTRHTLEKRMNKLGTRLVPVERREKLKTSRDKL) are leucine-zipper 3. Serine 302 is subject to Phosphoserine. Phosphothreonine is present on threonine 304. Tyrosine 310 carries the post-translational modification Phosphotyrosine. Lysine 328 participates in a covalent cross-link: Glycyl lysine isopeptide (Lys-Gly) (interchain with G-Cter in SUMO2). The segment at 347 to 367 (GPDDDEVGAERGAETDLLRGS) is disordered. Positions 354-363 (GAERGAETDL) are enriched in basic and acidic residues. A phosphoserine mark is found at serine 367, serine 368, serine 381, serine 389, and serine 391.

It belongs to the CAVIN family. As to quaternary structure, component of the CAVIN complex composed of CAVIN1, CAVIN2, CAVIN3 and CAVIN4. Interacts with RNA polymerase I subunit POLR1A/RPA1 and TTF1. Binds the 3' end of pre-rRNA. Interacts with transcription factor ZNF148. Interacts with LIPE in the adipocyte cytoplasm. Interacts with CAV1, CAV3, CAVIN2, CAVIN3 and CAVIN4. In terms of processing, phosphorylated. Present in active and inactive forms. Changes in phosphorylation pattern may alter activity. Phosphorylation at Tyr-158 is essential for its function in the regulation of ribosomal transcriptional activity. Monoubiquitinated. Expressed in the adipocyte (at protein level). Expressed in all striated and smooth muscles tested including diaphragm, esophageal striated muscle, fibroblast, endocardial endothelium, epicardial mesothelium, intestinal smooth muscle, masseter, soleus muscle, vascular smooth muscle and white gastrocnemius muscle (at protein level). Expressed in the endothelium and perineural sheath (at protein level). Not expressed in hepatocytes.

The protein localises to the membrane. The protein resides in the caveola. Its subcellular location is the cell membrane. It localises to the microsome. It is found in the endoplasmic reticulum. The protein localises to the cytoplasm. The protein resides in the cytosol. Its subcellular location is the mitochondrion. It localises to the nucleus. In terms of biological role, plays an important role in caveolae formation and organization. Essential for the formation of caveolae in all tissues. Core component of the CAVIN complex which is essential for recruitment of the complex to the caveolae in presence of calveolin-1 (CAV1). Essential for normal oligomerization of CAV1. Promotes ribosomal transcriptional activity in response to metabolic challenges in the adipocytes and plays an important role in the formation of the ribosomal transcriptional loop. Dissociates transcription complexes paused by DNA-bound TTF1, thereby releasing both RNA polymerase I and pre-RNA from the template. The caveolae biogenesis pathway is required for the secretion of proteins such as GASK1A. This Rattus norvegicus (Rat) protein is Caveolae-associated protein 1.